A 37-amino-acid chain; its full sequence is Cytochrome b6-f complex subunit 5 (37 aa).

A helical transmembrane segment spans residues Leu-5 to Ala-25.

Belongs to the PetG family. As to quaternary structure, the 4 large subunits of the cytochrome b6-f complex are cytochrome b6, subunit IV (17 kDa polypeptide, PetD), cytochrome f and the Rieske protein, while the 4 small subunits are PetG, PetL, PetM and PetN. The complex functions as a dimer.

The protein localises to the plastid. It localises to the chloroplast thylakoid membrane. Component of the cytochrome b6-f complex, which mediates electron transfer between photosystem II (PSII) and photosystem I (PSI), cyclic electron flow around PSI, and state transitions. PetG is required for either the stability or assembly of the cytochrome b6-f complex. The polypeptide is Cytochrome b6-f complex subunit 5 (Angiopteris evecta (Mule's foot fern)).